Consider the following 790-residue polypeptide: PAN2-PAN3 deadenylation complex subunit PAN3 (790 aa).

Disordered regions lie at residues 166-191 and 235-259; these read IAQQ…AVSA and AMIS…ASPI. The span at 168–191 shows a compositional bias: low complexity; the sequence is QQQPQHPQKQQQHPPSVGGGAVSA. The segment at 369 to 655 is pseudokinase domain; it reads DAAEAAQHAL…SVTDLMPMIG (287 aa). ATP is bound by residues Arg423, 472–479, and 552–553; these read DYHPGSQT and TK. Residues 656–694 adopt a coiled-coil conformation; the sequence is ARFYTQLDALQSKIDMQEDELAKEMENGRLYRILVKLNS. Residues 695–790 form a knob domain region; that stretch reads INERPDFNLD…FSELMSSAAN (96 aa).

It belongs to the protein kinase superfamily. PAN3 family. Homodimer. Forms a heterotrimer with a catalytic subunit PAN2 to form the poly(A)-nuclease (PAN) deadenylation complex. Interacts (via PAM-2 motif) with poly(A)-binding protein (via PABC domain), conferring substrate specificity of the enzyme complex. Interacts with the GW182 family protein gw. Interacts with Gyf.

Its subcellular location is the cytoplasm. The protein resides in the P-body. Functionally, regulatory subunit of the poly(A)-nuclease (PAN) deadenylation complex, one of two cytoplasmic mRNA deadenylases involved in general and miRNA-mediated mRNA turnover. PAN specifically shortens poly(A) tails of RNA and the activity is stimulated by poly(A)-binding protein (PABP). PAN deadenylation is followed by rapid degradation of the shortened mRNA tails by the CCR4-NOT complex. Deadenylated mRNAs are then degraded by two alternative mechanisms, namely exosome-mediated 3'-5' exonucleolytic degradation, or deadenylation-dependent mRNA decaping and subsequent 5'-3' exonucleolytic degradation by XRN1. PAN3 acts as a positive regulator for PAN activity, recruiting the catalytic subunit PAN2 to mRNA via its interaction with RNA and PABP, and to miRNA targets via its interaction with GW182 family proteins. The protein is PAN2-PAN3 deadenylation complex subunit PAN3 of Drosophila melanogaster (Fruit fly).